The primary structure comprises 313 residues: Acetaldehyde dehydrogenase (313 aa).

Residue 15–18 (SGNI) participates in NAD(+) binding. Catalysis depends on cysteine 133, which acts as the Acyl-thioester intermediate. NAD(+)-binding positions include 164–172 (SAGPGTRAN) and asparagine 289.

This sequence belongs to the acetaldehyde dehydrogenase family.

It carries out the reaction acetaldehyde + NAD(+) + CoA = acetyl-CoA + NADH + H(+). The chain is Acetaldehyde dehydrogenase from Rhizobium rhizogenes (strain K84 / ATCC BAA-868) (Agrobacterium radiobacter).